The following is a 429-amino-acid chain: Glutamate-1-semialdehyde 2,1-aminomutase 2 (429 aa).

At lysine 268 the chain carries N6-(pyridoxal phosphate)lysine.

The protein belongs to the class-III pyridoxal-phosphate-dependent aminotransferase family. HemL subfamily. Homodimer. Pyridoxal 5'-phosphate serves as cofactor.

It is found in the cytoplasm. The enzyme catalyses (S)-4-amino-5-oxopentanoate = 5-aminolevulinate. Its pathway is porphyrin-containing compound metabolism; protoporphyrin-IX biosynthesis; 5-aminolevulinate from L-glutamyl-tRNA(Glu): step 2/2. The protein is Glutamate-1-semialdehyde 2,1-aminomutase 2 of Bacillus anthracis (strain A0248).